The chain runs to 122 residues: MAAPVDLELKKAFAELQAKMVDTQQKVKLADLQIEQLSRVKKHANLTHGEITSLPESTRMFEGAGRMFILQSKGEISNQLLEKQKTADDKIKELEQKKTYLERSVKDAEDNIREMLMSRRAQ.

This sequence belongs to the prefoldin subunit beta family. In terms of assembly, heterohexamer of two PFD-alpha type and four PFD-beta type subunits.

Its function is as follows. Binds specifically to cytosolic chaperonin (c-CPN) and transfers target proteins to it. Binds to nascent polypeptide chain and promotes folding in an environment in which there are many competing pathways for nonnative proteins. The polypeptide is Prefoldin subunit 1 (pfdn1) (Danio rerio (Zebrafish)).